Reading from the N-terminus, the 678-residue chain is Zinc finger protein 334 (678 aa).

The KRAB domain maps to 8-79 (VSFQDLTVNF…EEFSNQNYPE (72 aa)). C2H2-type zinc fingers lie at residues 235–257 (NEPC…QRIH), 263–285 (YVCN…QRIH), 291–313 (YECS…QKIH), 319–341 (YECN…FRSH), 347–369 (YECK…QRTH), 375–397 (NECK…QRIH), 403–425 (YECS…RRSH), 431–453 (YECS…QITH), 459–481 (YECN…QRTH), 542–564 (YECN…QRTH), 570–592 (YECN…QRTH), 598–620 (YERN…RRIH), 626–648 (YECN…QKIH), and 654–676 (YECN…QKSH).

It belongs to the krueppel C2H2-type zinc-finger protein family.

It is found in the nucleus. Functionally, may be involved in transcriptional regulation. This chain is Zinc finger protein 334 (ZNF334), found in Pongo abelii (Sumatran orangutan).